The primary structure comprises 423 residues: 3-phosphoshikimate 1-carboxyvinyltransferase (423 aa).

Residues Lys21, Ser22, and Arg26 each coordinate 3-phosphoshikimate. Lys21 lines the phosphoenolpyruvate pocket. Positions 93 and 123 each coordinate phosphoenolpyruvate. 3-phosphoshikimate contacts are provided by Ser168, Ser169, Gln170, Ser196, Asp311, and Lys338. Gln170 is a phosphoenolpyruvate binding site. The active-site Proton acceptor is Asp311. Positions 342, 383, and 408 each coordinate phosphoenolpyruvate.

This sequence belongs to the EPSP synthase family. Monomer.

Its subcellular location is the cytoplasm. The enzyme catalyses 3-phosphoshikimate + phosphoenolpyruvate = 5-O-(1-carboxyvinyl)-3-phosphoshikimate + phosphate. It participates in metabolic intermediate biosynthesis; chorismate biosynthesis. Functionally, catalyzes the transfer of the enolpyruvyl moiety of phosphoenolpyruvate (PEP) to the 5-hydroxyl of shikimate-3-phosphate (S3P) to produce enolpyruvyl shikimate-3-phosphate and inorganic phosphate. In Methanosphaerula palustris (strain ATCC BAA-1556 / DSM 19958 / E1-9c), this protein is 3-phosphoshikimate 1-carboxyvinyltransferase.